The sequence spans 248 residues: Ribosomal RNA small subunit methyltransferase J (248 aa).

S-adenosyl-L-methionine-binding positions include R101–D102, E117–R118, S153–S154, and D171.

It belongs to the methyltransferase superfamily. RsmJ family.

Its subcellular location is the cytoplasm. It catalyses the reaction guanosine(1516) in 16S rRNA + S-adenosyl-L-methionine = N(2)-methylguanosine(1516) in 16S rRNA + S-adenosyl-L-homocysteine + H(+). Its function is as follows. Specifically methylates the guanosine in position 1516 of 16S rRNA. This chain is Ribosomal RNA small subunit methyltransferase J, found in Pectobacterium atrosepticum (strain SCRI 1043 / ATCC BAA-672) (Erwinia carotovora subsp. atroseptica).